A 242-amino-acid polypeptide reads, in one-letter code: 7-cyano-7-deazaguanine synthase (242 aa).

Residues 1–22 (MNSSSNEKNKDLNRKNFSSKTD) form a disordered region. 32-42 (LSGGLDSTTCL) is an ATP binding site. 4 residues coordinate Zn(2+): Cys212, Cys221, Cys224, and Cys227.

It belongs to the QueC family. Zn(2+) serves as cofactor.

It carries out the reaction 7-carboxy-7-deazaguanine + NH4(+) + ATP = 7-cyano-7-deazaguanine + ADP + phosphate + H2O + H(+). Its pathway is purine metabolism; 7-cyano-7-deazaguanine biosynthesis. In terms of biological role, catalyzes the ATP-dependent conversion of 7-carboxy-7-deazaguanine (CDG) to 7-cyano-7-deazaguanine (preQ(0)). The protein is 7-cyano-7-deazaguanine synthase of Leptospira interrogans serogroup Icterohaemorrhagiae serovar copenhageni (strain Fiocruz L1-130).